We begin with the raw amino-acid sequence, 378 residues long: Putative glutamate--cysteine ligase 2 (378 aa).

It belongs to the glutamate--cysteine ligase type 2 family. YbdK subfamily.

It catalyses the reaction L-cysteine + L-glutamate + ATP = gamma-L-glutamyl-L-cysteine + ADP + phosphate + H(+). ATP-dependent carboxylate-amine ligase which exhibits weak glutamate--cysteine ligase activity. This is Putative glutamate--cysteine ligase 2 from Bdellovibrio bacteriovorus (strain ATCC 15356 / DSM 50701 / NCIMB 9529 / HD100).